The primary structure comprises 486 residues: Zinc finger CCCH domain-containing protein 49 (486 aa).

The C3H1-type zinc finger occupies 157–184 (RNRAHVCSFYVRGECTRGAECPYRHEMP). Residues 228–301 (RTLYIGGLDS…VRLKLMWGKP (74 aa)) form the RRM domain. Disordered regions lie at residues 329–348 (SQQQ…QQQP) and 379–486 (LVES…NGMT). Low complexity-rich tracts occupy residues 389 to 407 (PGPQ…GQSY) and 415 to 430 (YHGG…YGGY). The span at 431–444 (MPPPRMPYQQPPQY) shows a compositional bias: pro residues. Positions 445 to 486 (PAYQPMLAPPAQSQASSLQQPAPATQQLGQGPQQQTTQNGMT) are enriched in low complexity.

This is Zinc finger CCCH domain-containing protein 49 from Oryza sativa subsp. japonica (Rice).